The sequence spans 594 residues: MAAGDLLLRTQSGLPVLARAFPSCLCLRVPARRRRGAPPLTAAKVDVADAVGRRVRSGGAAVPKRRRSRRDAEEEEEEGLAFSRVVTGRGRGVREEGVAEGEAPEFDAAKSGDESGGVDGSYLSDTRFDQCTISPLSLKAVKDAGYERMTQVQEATLPVILQGKDVLAKAKTGTGKTVAFLLPAIEVLSALPNSRRDQLRPSINLLVMCPTRELAIQVAVEAKKLLKYHRSLGVQVVIGGTRLTQEQRSMQANPCQILVATPGRLKDHVENTPGFSTRLKGVKVLVLDEADRLLDMGFRRDIERIIASVPKERQTLLFSATVPEEVRQISHIAMKKNYKFINTVKDGDEETHAQVSQMFMIAPLDLHFSILYDVLKKHVAEDADYKVIIFCTTAMVTKLVAEILSQLRLNIREIHSRKSQSARTKVSDEFRKSRGLILVSSDVSARGVDYPDVTLVIQVGVPADRQQYIHRLGRTGRKGKEGQGLLLLAPWEKYFLSSIKDLSISEATVPSVDSSTQTIVKDAVRKVEMRSKECAYQAWLGYYNSNKTIGREKSRLVKLAEEFSQSMELSVPPAIPKQILRKMGLNNVPGLRST.

Disordered regions lie at residues 56 to 80 (RSGG…EEGL) and 92 to 121 (GVRE…VDGS). A Q motif motif is present at residues 126–154 (TRFDQCTISPLSLKAVKDAGYERMTQVQE). In terms of domain architecture, Helicase ATP-binding spans 157-340 (LPVILQGKDV…HIAMKKNYKF (184 aa)). ATP is bound at residue 170 to 177 (AKTGTGKT). The short motif at 288 to 291 (DEAD) is the DEAD box element. One can recognise a Helicase C-terminal domain in the interval 370–520 (ILYDVLKKHV…SVDSSTQTIV (151 aa)).

This sequence belongs to the DEAD box helicase family.

It catalyses the reaction ATP + H2O = ADP + phosphate + H(+). This is DEAD-box ATP-dependent RNA helicase 25 from Oryza sativa subsp. japonica (Rice).